Consider the following 257-residue polypeptide: Peptide methionine sulfoxide reductase (257 aa).

Positions 61–88 are disordered; that stretch reads LGFGSRPQPDPAASSAIAQGPDDDVPSP. Ser-244 is subject to Phosphoserine.

This sequence belongs to the MsrA Met sulfoxide reductase family.

The catalysed reaction is L-methionyl-[protein] + [thioredoxin]-disulfide + H2O = L-methionyl-(S)-S-oxide-[protein] + [thioredoxin]-dithiol. It carries out the reaction [thioredoxin]-disulfide + L-methionine + H2O = L-methionine (S)-S-oxide + [thioredoxin]-dithiol. Functionally, has an important function as a repair enzyme for proteins that have been inactivated by oxidation. Catalyzes the reversible oxidation-reduction of methionine sulfoxide in proteins to methionine. The chain is Peptide methionine sulfoxide reductase (PMSR) from Brassica napus (Rape).